Reading from the N-terminus, the 550-residue chain is Cell pattern formation-associated protein STUA (550 aa).

The HTH APSES-type domain maps to 86–192; the sequence is RVTATLWEDE…HNIGALLYHP (107 aa). The segment at residues 120 to 141 is a DNA-binding region (H-T-H motif); sequence GTKLLNVAGMTRGRRDGILKSE. The span at 246–266 shows a compositional bias: polar residues; sequence SLANGPQSLASTPQPLTNGSQ. 4 disordered regions span residues 246–277, 371–412, 447–467, and 527–550; these read SLAN…GMLK, HHQP…VKRR, KRRD…DHLN, and APVY…QSFG. Over residues 385–395 the composition is skewed to basic and acidic residues; that stretch reads RGRDEDDDVHR. Positions 517–546 are nuclear localization domain; sequence TVAASPSYPSAPVYDTGARPPSAISAPRRQ.

This sequence belongs to the EFG1/PHD1/stuA family.

It localises to the nucleus. Transcription factor that regulates asexual reproduction. Binds the StuA-response elements (StRE) with the consensus sequence 5'-(A/T)CGCG(T/A)N(A/C)-3' at the promoters of target genes. Differentially regulates the development of macroconidia, microconidia, and chlamydospores. Acts as a positive regulator for the development of macroconidia and as a negative regulator for the development of chlamydospores. Involved in microconidium formation specifically in infected plants. This Fusarium oxysporum (Fusarium vascular wilt) protein is Cell pattern formation-associated protein STUA.